An 86-amino-acid polypeptide reads, in one-letter code: Small ribosomal subunit protein bS20 (86 aa).

The span at 1 to 16 (MANIKSQEKRIRTNER) shows a compositional bias: basic and acidic residues. Residues 1-25 (MANIKSQEKRIRTNERRRLRNQSVK) are disordered.

It belongs to the bacterial ribosomal protein bS20 family.

Binds directly to 16S ribosomal RNA. This Mycobacterium sp. (strain JLS) protein is Small ribosomal subunit protein bS20.